A 906-amino-acid chain; its full sequence is Aconitate hydratase A (906 aa).

Residues Cys-443, Cys-509, and Cys-512 each contribute to the [4Fe-4S] cluster site.

This sequence belongs to the aconitase/IPM isomerase family. In terms of assembly, monomer. Requires [4Fe-4S] cluster as cofactor.

The catalysed reaction is citrate = D-threo-isocitrate. It catalyses the reaction (2S,3R)-3-hydroxybutane-1,2,3-tricarboxylate = 2-methyl-cis-aconitate + H2O. It functions in the pathway carbohydrate metabolism; tricarboxylic acid cycle; isocitrate from oxaloacetate: step 2/2. It participates in organic acid metabolism; propanoate degradation. Its function is as follows. Involved in the catabolism of short chain fatty acids (SCFA) via the tricarboxylic acid (TCA)(acetyl degradation route) and probably via the 2-methylcitrate cycle I (propionate degradation route). Catalyzes the reversible isomerization of citrate to isocitrate via cis-aconitate. Could catalyze the hydration of 2-methyl-cis-aconitate to yield (2R,3S)-2-methylisocitrate. The apo form of AcnA functions as a RNA-binding regulatory protein. The sequence is that of Aconitate hydratase A from Bradyrhizobium diazoefficiens (strain JCM 10833 / BCRC 13528 / IAM 13628 / NBRC 14792 / USDA 110).